A 328-amino-acid polypeptide reads, in one-letter code: Cytosolic Fe-S cluster assembly factor NBP35 (328 aa).

Positions 27, 41, 44, and 50 each coordinate [4Fe-4S] cluster. Residue 80 to 87 (GKGGVGKS) participates in ATP binding. 2 residues coordinate [4Fe-4S] cluster: cysteine 253 and cysteine 256.

Belongs to the Mrp/NBP35 ATP-binding proteins family. NUBP1/NBP35 subfamily. As to quaternary structure, heterotetramer of 2 NBP35 and 2 CFD1 chains. It depends on [4Fe-4S] cluster as a cofactor.

It localises to the cytoplasm. The protein resides in the nucleus. Component of the cytosolic iron-sulfur (Fe/S) protein assembly (CIA) machinery. Required for maturation of extramitochondrial Fe-S proteins. The NBP35-CFD1 heterotetramer forms a Fe-S scaffold complex, mediating the de novo assembly of an Fe-S cluster and its transfer to target apoproteins. Required for biogenesis and export of both ribosomal subunits, which may reflect a role in assembly of the Fe/S clusters in RLI1, a protein which performs rRNA processing and ribosome export. This is Cytosolic Fe-S cluster assembly factor NBP35 from Saccharomyces cerevisiae (strain ATCC 204508 / S288c) (Baker's yeast).